A 227-amino-acid polypeptide reads, in one-letter code: Guanylate kinase (227 aa).

Residues 21–199 (GNLFMVVAPS…ALAELECIVA (179 aa)) enclose the Guanylate kinase-like domain. 28–35 (APSGAGKS) is an ATP binding site.

The protein belongs to the guanylate kinase family.

The protein resides in the cytoplasm. It catalyses the reaction GMP + ATP = GDP + ADP. In terms of biological role, essential for recycling GMP and indirectly, cGMP. The chain is Guanylate kinase from Burkholderia mallei (strain ATCC 23344).